Here is a 331-residue protein sequence, read N- to C-terminus: 3-dehydroquinate synthase homolog (331 aa).

Belongs to the archaeal-type DHQ synthase family.

The chain is 3-dehydroquinate synthase homolog from Aquifex aeolicus (strain VF5).